Here is a 299-residue protein sequence, read N- to C-terminus: Probable lipid kinase YegS (299 aa).

A DAGKc domain is found at 2 to 133; the sequence is AEFPASLLIL…IDMAQVNKQT (132 aa). Residues threonine 40, 66–72, and threonine 95 each bind ATP; that span reads GDGTINE. 3 residues coordinate Mg(2+): leucine 215, aspartate 218, and leucine 220. The active-site Proton acceptor is glutamate 271.

The protein belongs to the diacylglycerol/lipid kinase family. YegS lipid kinase subfamily. It depends on Mg(2+) as a cofactor. The cofactor is Ca(2+).

The protein localises to the cytoplasm. In terms of biological role, probably phosphorylates lipids; the in vivo substrate is unknown. The polypeptide is Probable lipid kinase YegS (Escherichia coli O17:K52:H18 (strain UMN026 / ExPEC)).